The following is an 844-amino-acid chain: Translation initiation factor IF-2 (844 aa).

Positions 1 to 11 are enriched in basic and acidic residues; it reads MTEDVKADVPK. Disordered stretches follow at residues 1–35 and 79–248; these read MTEDVKADVPKKLSIQRRTKTTVSGTTTSGKSKAV and RLEA…KGAA. Over residues 21-33 the composition is skewed to low complexity; the sequence is TTVSGTTTSGKSK. The segment covering 79-161 has biased composition (basic and acidic residues); the sequence is RLEAEKAATK…AAEEAKRYAE (83 aa). Acidic residues predominate over residues 162 to 175; that stretch reads ADDSDNESSSEDYS. The span at 200–210 shows a compositional bias: basic residues; sequence RGKNKVAKAKK. Positions 211 to 237 are enriched in basic and acidic residues; the sequence is GGRDDENSKNSKNERESNRKNQKDAKF. The tr-type G domain maps to 343–513; that stretch reads TRAPVVTIMG…LLQSEVLELT (171 aa). The segment at 352-359 is G1; that stretch reads GHVDHGKT. 352–359 contributes to the GTP binding site; the sequence is GHVDHGKT. Residues 377–381 are G2; that stretch reads GITQH. The G3 stretch occupies residues 399–402; that stretch reads DTPG. GTP is bound by residues 399–403 and 453–456; these read DTPGH and NKID. The G4 stretch occupies residues 453-456; sequence NKID. The tract at residues 489-491 is G5; the sequence is SAK.

It belongs to the TRAFAC class translation factor GTPase superfamily. Classic translation factor GTPase family. IF-2 subfamily.

Its subcellular location is the cytoplasm. One of the essential components for the initiation of protein synthesis. Protects formylmethionyl-tRNA from spontaneous hydrolysis and promotes its binding to the 30S ribosomal subunits. Also involved in the hydrolysis of GTP during the formation of the 70S ribosomal complex. In Haemophilus influenzae (strain PittGG), this protein is Translation initiation factor IF-2.